Consider the following 376-residue polypeptide: Cobalt-precorrin-5B C(1)-methyltransferase (376 aa).

Positions 353-376 (KGRTTSTPSHQPAPSSFGDRNRRT) are disordered. Residues 355–366 (RTTSTPSHQPAP) are compositionally biased toward polar residues.

It belongs to the CbiD family.

It carries out the reaction Co-precorrin-5B + S-adenosyl-L-methionine = Co-precorrin-6A + S-adenosyl-L-homocysteine. The protein operates within cofactor biosynthesis; adenosylcobalamin biosynthesis; cob(II)yrinate a,c-diamide from sirohydrochlorin (anaerobic route): step 6/10. Catalyzes the methylation of C-1 in cobalt-precorrin-5B to form cobalt-precorrin-6A. This chain is Cobalt-precorrin-5B C(1)-methyltransferase, found in Agrobacterium fabrum (strain C58 / ATCC 33970) (Agrobacterium tumefaciens (strain C58)).